A 579-amino-acid chain; its full sequence is Thiol:disulfide interchange protein DsbD (579 aa).

Residues 1-16 (MKKLFLFFTLIFTAFA) form the signal peptide. Intrachain disulfides connect Cys-124/Cys-129 and Cys-193/Cys-315. Transmembrane regions (helical) follow at residues 178-198 (IFGF…LPML), 230-250 (LTYT…QIAL), 254-274 (YVMI…FGLF), 296-316 (GAFG…SPCT), 337-357 (AATL…ITLF), 376-396 (FGFV…PEVW), 397-417 (EPRL…LQMS), and 420-440 (GFGY…VQPL). One can recognise a Thioredoxin domain in the interval 449–579 (TTTQSAVENM…AFSNWLKALH (131 aa)). Cys-495 and Cys-498 are oxidised to a cystine.

It belongs to the thioredoxin family. DsbD subfamily.

It is found in the cell inner membrane. It carries out the reaction [protein]-dithiol + NAD(+) = [protein]-disulfide + NADH + H(+). The catalysed reaction is [protein]-dithiol + NADP(+) = [protein]-disulfide + NADPH + H(+). Functionally, required to facilitate the formation of correct disulfide bonds in some periplasmic proteins and for the assembly of the periplasmic c-type cytochromes. Acts by transferring electrons from cytoplasmic thioredoxin to the periplasm. This transfer involves a cascade of disulfide bond formation and reduction steps. This Haemophilus influenzae (strain 86-028NP) protein is Thiol:disulfide interchange protein DsbD.